A 203-amino-acid chain; its full sequence is Outer-membrane lipoprotein carrier protein (203 aa).

The signal sequence occupies residues 1–21; sequence MKKLILIGCLMAGMNINVAWA.

It belongs to the LolA family. Monomer.

The protein resides in the periplasm. In terms of biological role, participates in the translocation of lipoproteins from the inner membrane to the outer membrane. Only forms a complex with a lipoprotein if the residue after the N-terminal Cys is not an aspartate (The Asp acts as a targeting signal to indicate that the lipoprotein should stay in the inner membrane). The polypeptide is Outer-membrane lipoprotein carrier protein (Photorhabdus laumondii subsp. laumondii (strain DSM 15139 / CIP 105565 / TT01) (Photorhabdus luminescens subsp. laumondii)).